Consider the following 459-residue polypeptide: MTSRSATATARTSSEARAVARTQTLIKGEHGIGTVRRTTLPGGLRIVTETLPSVRSATFGIWAHVGSRDETPALNGATHYLEHLLFKGTRKRSALDISSAIDAVGGEMNAFTAKEYTCYYARVLDTDLPLAIDVVCDMLTGSLIQEEDVDVERGAILEEIAMTEDDPGDCVHDLFAHTMFGDNALGRPVLGTVDTVNALTADRIRRFYRKHYDPTHLVVAAAGNVDHNKVVRQVRAAFEKSGALKDPAAQPLAPRAGRRTVRAAGRVELIGRKTEQAHVILGMPGLARTDERRWAMGVLNTALGGGMSSRLFQEVREKRGLAYSVYSYTSGFADCGLFGVYAGCRPSQVHDVLKICRDELDHVAEHGLTDDEIGRAVGQLQGSTVLGLEDTGALMNRIGKSELCWGEQMSVDDMLARIASVTPDDVRAVARDVLGRRPSLSVIGPLKDKQASRLHDAVA.

Histidine 79 provides a ligand contact to Zn(2+). Glutamate 82 acts as the Proton acceptor in catalysis. 2 residues coordinate Zn(2+): histidine 83 and glutamate 159.

Belongs to the peptidase M16 family. Requires Zn(2+) as cofactor.

This is an uncharacterized protein from Streptomyces coelicolor (strain ATCC BAA-471 / A3(2) / M145).